The primary structure comprises 211 residues: tRNA (guanine-N(7)-)-methyltransferase (211 aa).

The S-adenosyl-L-methionine site is built by glutamate 44, aspartate 69, aspartate 96, and aspartate 118. Aspartate 118 is an active-site residue. Residue lysine 122 participates in substrate binding. Positions 124–129 (KHEKRR) are interaction with RNA. Residues aspartate 154 and 191–194 (TEYE) contribute to the substrate site.

It belongs to the class I-like SAM-binding methyltransferase superfamily. TrmB family.

The catalysed reaction is guanosine(46) in tRNA + S-adenosyl-L-methionine = N(7)-methylguanosine(46) in tRNA + S-adenosyl-L-homocysteine. It participates in tRNA modification; N(7)-methylguanine-tRNA biosynthesis. Its function is as follows. Catalyzes the formation of N(7)-methylguanine at position 46 (m7G46) in tRNA. This chain is tRNA (guanine-N(7)-)-methyltransferase, found in Streptococcus agalactiae serotype Ia (strain ATCC 27591 / A909 / CDC SS700).